A 564-amino-acid polypeptide reads, in one-letter code: Dihydroxy-acid dehydratase (564 aa).

C53 serves as a coordination point for [2Fe-2S] cluster. Mg(2+) is bound at residue D85. C126 is a binding site for [2Fe-2S] cluster. Positions 127 and 128 each coordinate Mg(2+). At K128 the chain carries N6-carboxylysine. C203 contacts [2Fe-2S] cluster. E454 contacts Mg(2+). Residue S480 is the Proton acceptor of the active site.

The protein belongs to the IlvD/Edd family. Homodimer. The cofactor is [2Fe-2S] cluster. Requires Mg(2+) as cofactor.

It catalyses the reaction (2R)-2,3-dihydroxy-3-methylbutanoate = 3-methyl-2-oxobutanoate + H2O. The catalysed reaction is (2R,3R)-2,3-dihydroxy-3-methylpentanoate = (S)-3-methyl-2-oxopentanoate + H2O. It participates in amino-acid biosynthesis; L-isoleucine biosynthesis; L-isoleucine from 2-oxobutanoate: step 3/4. It functions in the pathway amino-acid biosynthesis; L-valine biosynthesis; L-valine from pyruvate: step 3/4. Functions in the biosynthesis of branched-chain amino acids. Catalyzes the dehydration of (2R,3R)-2,3-dihydroxy-3-methylpentanoate (2,3-dihydroxy-3-methylvalerate) into 2-oxo-3-methylpentanoate (2-oxo-3-methylvalerate) and of (2R)-2,3-dihydroxy-3-methylbutanoate (2,3-dihydroxyisovalerate) into 2-oxo-3-methylbutanoate (2-oxoisovalerate), the penultimate precursor to L-isoleucine and L-valine, respectively. In Mycobacterium leprae (strain TN), this protein is Dihydroxy-acid dehydratase.